The sequence spans 156 residues: Small ribosomal subunit protein uS7 (156 aa).

The protein belongs to the universal ribosomal protein uS7 family. As to quaternary structure, part of the 30S ribosomal subunit. Contacts proteins S9 and S11.

In terms of biological role, one of the primary rRNA binding proteins, it binds directly to 16S rRNA where it nucleates assembly of the head domain of the 30S subunit. Is located at the subunit interface close to the decoding center, probably blocks exit of the E-site tRNA. This Methylobacterium nodulans (strain LMG 21967 / CNCM I-2342 / ORS 2060) protein is Small ribosomal subunit protein uS7.